Reading from the N-terminus, the 252-residue chain is D-aminoacyl-tRNA deacylase (252 aa).

Belongs to the DtdA deacylase family. As to quaternary structure, monomer. It depends on Zn(2+) as a cofactor.

It catalyses the reaction a D-aminoacyl-tRNA + H2O = a tRNA + a D-alpha-amino acid + H(+). The enzyme catalyses glycyl-tRNA(Ala) + H2O = tRNA(Ala) + glycine + H(+). In terms of biological role, D-aminoacyl-tRNA deacylase with broad substrate specificity. By recycling D-aminoacyl-tRNA to D-amino acids and free tRNA molecules, this enzyme counteracts the toxicity associated with the formation of D-aminoacyl-tRNA entities in vivo. In Pyrobaculum neutrophilum (strain DSM 2338 / JCM 9278 / NBRC 100436 / V24Sta) (Thermoproteus neutrophilus), this protein is D-aminoacyl-tRNA deacylase.